A 186-amino-acid chain; its full sequence is Ribosome-recycling factor (186 aa).

It belongs to the RRF family.

It is found in the cytoplasm. Its function is as follows. Responsible for the release of ribosomes from messenger RNA at the termination of protein biosynthesis. May increase the efficiency of translation by recycling ribosomes from one round of translation to another. In Bartonella quintana (strain Toulouse) (Rochalimaea quintana), this protein is Ribosome-recycling factor.